We begin with the raw amino-acid sequence, 206 residues long: Large ribosomal subunit protein mL62 (206 aa).

The N-terminal 29 residues, 1–29 (MAATRCLRWGLSRAGVWLLPPPARCPRRA), are a transit peptide targeting the mitochondrion. Q90 carries the N5-methylglutamine modification.

This sequence belongs to the prokaryotic/mitochondrial release factor family. Mitochondrion-specific ribosomal protein mL62 subfamily. Component of the mitochondrial large ribosomal subunit (mt-LSU). Mature mammalian 55S mitochondrial ribosomes consist of a small (28S) and a large (39S) subunit. The 28S small subunit contains a 12S ribosomal RNA (12S mt-rRNA) and 30 different proteins. The 39S large subunit contains a 16S rRNA (16S mt-rRNA), a copy of mitochondrial valine transfer RNA (mt-tRNA(Val)), which plays an integral structural role, and 52 different proteins. Post-translationally, methylation of glutamine in the GGQ triplet by HEMK1. In terms of tissue distribution, down-regulated during the in vitro differentiation of HT29-D4 colon carcinoma cells.

It is found in the mitochondrion. The enzyme catalyses an N-acyl-L-alpha-aminoacyl-tRNA + H2O = an N-acyl-L-amino acid + a tRNA + H(+). Its function is as follows. Essential peptidyl-tRNA hydrolase component of the mitochondrial large ribosomal subunit. Acts as a codon-independent translation release factor that has lost all stop codon specificity and directs the termination of translation in mitochondrion, possibly in case of abortive elongation. Involved in the hydrolysis of peptidyl-tRNAs that have been prematurely terminated and thus in the recycling of stalled mitochondrial ribosomes. This Homo sapiens (Human) protein is Large ribosomal subunit protein mL62.